Here is a 504-residue protein sequence, read N- to C-terminus: D-alanine--D-alanyl carrier protein ligase (504 aa).

ATP is bound at residue 152 to 153 (TS). Asp-197 serves as a coordination point for D-alanine. ATP is bound at residue 292–297 (NTYGPT). Residue Val-301 coordinates D-alanine. Residues Asp-383, 394-397 (YNGR), and Lys-492 each bind ATP. Lys-492 contributes to the D-alanine binding site.

This sequence belongs to the ATP-dependent AMP-binding enzyme family. DltA subfamily.

The protein resides in the cytoplasm. It carries out the reaction holo-[D-alanyl-carrier protein] + D-alanine + ATP = D-alanyl-[D-alanyl-carrier protein] + AMP + diphosphate. It participates in cell wall biogenesis; lipoteichoic acid biosynthesis. Its function is as follows. Catalyzes the first step in the D-alanylation of lipoteichoic acid (LTA), the activation of D-alanine and its transfer onto the D-alanyl carrier protein (Dcp) DltC. In an ATP-dependent two-step reaction, forms a high energy D-alanyl-AMP intermediate, followed by transfer of the D-alanyl residue as a thiol ester to the phosphopantheinyl prosthetic group of the Dcp. D-alanylation of LTA plays an important role in modulating the properties of the cell wall in Gram-positive bacteria, influencing the net charge of the cell wall. This is D-alanine--D-alanyl carrier protein ligase from Bacillus cereus (strain B4264).